The following is a 172-amino-acid chain: Peptide methionine sulfoxide reductase MsrA 2 (172 aa).

The active site involves Cys12.

Belongs to the MsrA Met sulfoxide reductase family.

It catalyses the reaction L-methionyl-[protein] + [thioredoxin]-disulfide + H2O = L-methionyl-(S)-S-oxide-[protein] + [thioredoxin]-dithiol. The catalysed reaction is [thioredoxin]-disulfide + L-methionine + H2O = L-methionine (S)-S-oxide + [thioredoxin]-dithiol. Its function is as follows. Has an important function as a repair enzyme for proteins that have been inactivated by oxidation. Catalyzes the reversible oxidation-reduction of methionine sulfoxide in proteins to methionine. The polypeptide is Peptide methionine sulfoxide reductase MsrA 2 (msrA2) (Lactococcus lactis subsp. lactis (strain IL1403) (Streptococcus lactis)).